Consider the following 504-residue polypeptide: Cytochrome P450 3A41 (504 aa).

Cys443 is a heme binding site.

The protein belongs to the cytochrome P450 family. Heme serves as cofactor. In terms of tissue distribution, expressed in liver. Also expressed in the kidneys of female mice, with traces in the stomach, ovary, and heart of female mice and in the testis of male mice.

It is found in the endoplasmic reticulum membrane. The protein localises to the microsome membrane. The catalysed reaction is an organic molecule + reduced [NADPH--hemoprotein reductase] + O2 = an alcohol + oxidized [NADPH--hemoprotein reductase] + H2O + H(+). In Mus musculus (Mouse), this protein is Cytochrome P450 3A41 (Cyp3a41a).